Here is a 213-residue protein sequence, read N- to C-terminus: High frequency lysogenization protein HflD homolog (213 aa).

Belongs to the HflD family.

The protein localises to the cytoplasm. The protein resides in the cell inner membrane. In Klebsiella pneumoniae (strain 342), this protein is High frequency lysogenization protein HflD homolog.